Reading from the N-terminus, the 228-residue chain is Uracil-DNA glycosylase (228 aa).

Asp64 serves as the catalytic Proton acceptor.

It belongs to the uracil-DNA glycosylase (UDG) superfamily. UNG family. Monomer.

Its subcellular location is the cytoplasm. The catalysed reaction is Hydrolyzes single-stranded DNA or mismatched double-stranded DNA and polynucleotides, releasing free uracil.. In terms of biological role, excises uracil residues from the DNA which can arise as a result of misincorporation of dUMP residues by DNA polymerase or due to deamination of cytosine. The polypeptide is Uracil-DNA glycosylase (Escherichia coli O6:H1 (strain CFT073 / ATCC 700928 / UPEC)).